An 809-amino-acid chain; its full sequence is Valine--tRNA ligase (809 aa).

Positions 60-70 match the 'HIGH' region motif; sequence PFTSGELHMGH. Residues 546-550 carry the 'KMSKS' region motif; that stretch reads RMSKS. Lysine 549 contacts ATP.

Belongs to the class-I aminoacyl-tRNA synthetase family. ValS type 2 subfamily.

It localises to the cytoplasm. The catalysed reaction is tRNA(Val) + L-valine + ATP = L-valyl-tRNA(Val) + AMP + diphosphate. Functionally, catalyzes the attachment of valine to tRNA(Val). As ValRS can inadvertently accommodate and process structurally similar amino acids such as threonine, to avoid such errors, it has a 'posttransfer' editing activity that hydrolyzes mischarged Thr-tRNA(Val) in a tRNA-dependent manner. This is Valine--tRNA ligase from Sulfurisphaera tokodaii (strain DSM 16993 / JCM 10545 / NBRC 100140 / 7) (Sulfolobus tokodaii).